The primary structure comprises 446 residues: Neuropeptide Y receptor type 5 (446 aa).

The Extracellular segment spans residues 1-42; that stretch reads MGSEIPDYYNKTLASENNTVATRNSGFPVWEDYKGSVDDLQY. Residues N10 and N17 are each glycosylated (N-linked (GlcNAc...) asparagine). The helical transmembrane segment at 43–63 threads the bilayer; it reads FLIGLYTFVSLLGFMGNLLIL. At 64-77 the chain is on the cytoplasmic side; it reads MAVMRKRNQKTTVN. Residues 78-98 form a helical membrane-spanning segment; the sequence is FLIGNLAFSDILVVLFCSPFT. Residues 99 to 117 are Extracellular-facing; it reads LTSVLLDQWMFGKVMCHIM. An intrachain disulfide couples C114 to C198. The chain crosses the membrane as a helical span at residues 118–138; it reads PFLQCVTVLVSTLILISIAIV. The Cytoplasmic segment spans residues 139-156; it reads RYHMIKHPVSNNLTANHG. Residues 157 to 177 traverse the membrane as a helical segment; sequence YFLIATVWTLGLAICSPLPVF. Topologically, residues 178–208 are extracellular; the sequence is HSLVELQESFGSAWLSSRYLCVESWPSDSYR. The chain crosses the membrane as a helical span at residues 209 to 229; that stretch reads IAFTISLLLVQYILPLVCLTV. Residues 230 to 369 lie on the Cytoplasmic side of the membrane; it reads SHTSVCRTIS…RKRSRSVFYR (140 aa). The interval 297–325 is disordered; sequence RPAPAGPALESREGRPPGKVGSMQSQPPP. A helical transmembrane segment spans residues 370–390; sequence LTVLILVFAVSWMPLHLFHVV. At 391–407 the chain is on the extracellular side; sequence TDFNDNLISNRHFKLVY. The helical transmembrane segment at 408-428 threads the bilayer; it reads CICHLLGMMSCCLNPILYGFL. The Cytoplasmic segment spans residues 429–446; sequence NNGIKADLMSLIHCLHVS. C442 carries S-palmitoyl cysteine lipidation.

This sequence belongs to the G-protein coupled receptor 1 family.

Its subcellular location is the cell membrane. Receptor for neuropeptide Y and peptide YY. The activity of this receptor is mediated by G proteins that inhibit adenylate cyclase activity. Seems to be associated with food intake. Could be involved in feeding disorders. This is Neuropeptide Y receptor type 5 (NPY5R) from Sus scrofa (Pig).